The chain runs to 566 residues: CTP synthase (566 aa).

The amidoligase domain stretch occupies residues 1-270 (MTKFVFVTGG…DGLICDKLRL (270 aa)). Ser-13 is a binding site for CTP. Residue Ser-13 participates in UTP binding. ATP-binding positions include 14 to 19 (SLGKGI) and Asp-71. Positions 71 and 144 each coordinate Mg(2+). Residues 151–153 (DIE), 191–196 (KTKPTQ), and Lys-227 each bind CTP. Residues 191–196 (KTKPTQ) and Lys-227 contribute to the UTP site. The region spanning 295–547 (SIAMVGKYVD…IAATLEQRSA (253 aa)) is the Glutamine amidotransferase type-1 domain. Gly-356 lines the L-glutamine pocket. Cys-383 functions as the Nucleophile; for glutamine hydrolysis in the catalytic mechanism. Residues 384–387 (LGMQ), Glu-407, and Arg-473 contribute to the L-glutamine site. Catalysis depends on residues His-520 and Glu-522.

It belongs to the CTP synthase family. Homotetramer.

The enzyme catalyses UTP + L-glutamine + ATP + H2O = CTP + L-glutamate + ADP + phosphate + 2 H(+). It catalyses the reaction L-glutamine + H2O = L-glutamate + NH4(+). The catalysed reaction is UTP + NH4(+) + ATP = CTP + ADP + phosphate + 2 H(+). It participates in pyrimidine metabolism; CTP biosynthesis via de novo pathway; CTP from UDP: step 2/2. Allosterically activated by GTP, when glutamine is the substrate; GTP has no effect on the reaction when ammonia is the substrate. The allosteric effector GTP functions by stabilizing the protein conformation that binds the tetrahedral intermediate(s) formed during glutamine hydrolysis. Inhibited by the product CTP, via allosteric rather than competitive inhibition. Functionally, catalyzes the ATP-dependent amination of UTP to CTP with either L-glutamine or ammonia as the source of nitrogen. Regulates intracellular CTP levels through interactions with the four ribonucleotide triphosphates. The polypeptide is CTP synthase (Polaromonas naphthalenivorans (strain CJ2)).